The primary structure comprises 560 residues: Diphtheria toxin (560 aa).

Residues 1 to 25 (MSRKLFASILIGALLGIGAPPSAHA) form the signal peptide. The NAD(+) site is built by histidine 46 and tyrosine 90. Glutamate 173 is an active-site residue. Intrachain disulfides connect cysteine 211–cysteine 226 and cysteine 486–cysteine 496.

Homodimer.

The enzyme catalyses diphthamide-[translation elongation factor 2] + NAD(+) = N-(ADP-D-ribosyl)diphthamide-[translation elongation factor 2] + nicotinamide + H(+). Diphtheria toxin, produced by a phage infecting Corynebacterium diphtheriae, is a proenzyme that, after activation, catalyzes the covalent attachment of the ADP ribose moiety of NAD to elongation factor 2. Fragment A is responsible for enzymatic ADP-ribosylation of elongation factor 2, while fragment B is responsible for binding of toxin to cell receptors and entry of fragment A. In Corynephage omega, this protein is Diphtheria toxin.